We begin with the raw amino-acid sequence, 240 residues long: Large ribosomal subunit protein uL2 (240 aa).

The span at 1–11 (MGKRLISQNRG) shows a compositional bias: polar residues. Disordered stretches follow at residues 1 to 28 (MGKR…KGAV) and 206 to 240 (GGGR…TGRK). Basic residues-rich tracts occupy residues 13–28 (GTPK…KGAV) and 224–240 (SPGR…TGRK).

The protein belongs to the universal ribosomal protein uL2 family. As to quaternary structure, part of the 50S ribosomal subunit. Forms a bridge to the 30S subunit in the 70S ribosome.

One of the primary rRNA binding proteins. Required for association of the 30S and 50S subunits to form the 70S ribosome, for tRNA binding and peptide bond formation. It has been suggested to have peptidyltransferase activity; this is somewhat controversial. Makes several contacts with the 16S rRNA in the 70S ribosome. The sequence is that of Large ribosomal subunit protein uL2 from Methanococcus maripaludis (strain C7 / ATCC BAA-1331).